A 579-amino-acid polypeptide reads, in one-letter code: ERV-BabFcenv provirus ancestral Env polyprotein (579 aa).

The first 22 residues, 1 to 22, serve as a signal peptide directing secretion; sequence MISAVLNLPSTPLLPLLWFTLI. The tract at residues 23–387 is surface protein; it reads IPASLTNPKF…LSSSNNIQKQ (365 aa). Residues 23 to 523 are Extracellular-facing; the sequence is IPASLTNPKF…VWLLPVVQQM (501 aa). N-linked (GlcNAc...) asparagine glycans are attached at residues asparagine 135, asparagine 203, asparagine 242, and asparagine 251. Positions 255–258 match the CXXC motif; it reads CFLC. Residues asparagine 276, asparagine 312, and asparagine 337 are each glycosylated (N-linked (GlcNAc...) asparagine). The interval 388–408 is fusion peptide; the sequence is AVFLPLIIGVSLASSLVASGL. The segment at 388 to 579 is transmembrane protein; the sequence is AVFLPLIIGV…LPTSDPNYAP (192 aa). The short motif at 453–469 is the CKS-17 element; sequence AQNRRALDLLTAEKGGT. An intrachain disulfide couples cysteine 470 to cysteine 477. The CX6CC motif lies at 470-478; it reads CLFLGEECC. Asparagine 482 carries an N-linked (GlcNAc...) asparagine glycan. A helical membrane pass occupies residues 524–544; sequence LPFLIPILILCLMLCLAPILI. Over 545 to 579 the chain is Cytoplasmic; the sequence is KFLRARVQEITRVTFNQMLLHPYTQLPTSDPNYAP.

Belongs to the gamma type-C retroviral envelope protein family. HERV class-I F(c)1 env subfamily. Post-translationally, specific enzymatic cleavages in vivo yield the mature SU and TM proteins. The CXXC motif is highly conserved across a broad range of retroviral envelope proteins. It is thought to participate in the formation of a labile disulfide bond possibly with the CX6CC motif present in the transmembrane domain.

It localises to the cell membrane. In terms of biological role, retroviral envelope proteins mediate receptor recognition and membrane fusion during early infection. Endogenous envelope proteins may have kept, lost or modified their original function during evolution. In Papio anubis (Olive baboon), this protein is ERV-BabFcenv provirus ancestral Env polyprotein.